The sequence spans 378 residues: MNIWLSMLTTTGLGAIIGGFTNHLAIKMLFRPHRPMYIGKFQVPFTPGLIPKRRDELAVQLGKMVVEHLLTPEGIGKKLTNEEFQKGLIHWAQVEVDKVMTNEQSLRHMLEKWDVAHVEKEATEKIEQVIIEKIEAFLEEYYTYTWEQALPHSVHEKIENAIPNVSAFILKRATHFFESEEGKSRLSKMIDDFFASRGALLNLVGMFLGNVSVVDRVQPEVIKFLGQDGTKQLLTDVLQKEWEKLKGRDVKELETFVEKEMIASSILSAVQVEETVGKFLNQSVQQVCEPVRETIIEKVVPGAVTKGLEWGAKNVESILNNLHLAEIVQQEVSTFSTERLEDLVLSITKNELKMITYLGALLGGMIGIVQGLLLLFLK.

The next 2 membrane-spanning stretches (helical) occupy residues 1–21 and 357–377; these read MNIWLSMLTTTGLGAIIGGFT and YLGALLGGMIGIVQGLLLLFL.

Belongs to the UPF0754 family.

Its subcellular location is the cell membrane. The polypeptide is UPF0754 membrane protein BALH_0780 (Bacillus thuringiensis (strain Al Hakam)).